A 289-amino-acid polypeptide reads, in one-letter code: Eukaryotic translation initiation factor 3 subunit F (289 aa).

The MPN domain maps to 7–137 (VKVHPVVLFQ…LRAYVCVPLG (131 aa)).

This sequence belongs to the eIF-3 subunit F family. As to quaternary structure, component of the eukaryotic translation initiation factor 3 (eIF-3) complex.

The protein localises to the cytoplasm. Component of the eukaryotic translation initiation factor 3 (eIF-3) complex, which is involved in protein synthesis of a specialized repertoire of mRNAs and, together with other initiation factors, stimulates binding of mRNA and methionyl-tRNAi to the 40S ribosome. The eIF-3 complex specifically targets and initiates translation of a subset of mRNAs involved in cell proliferation. This chain is Eukaryotic translation initiation factor 3 subunit F, found in Bombyx mori (Silk moth).